Reading from the N-terminus, the 709-residue chain is Polyribonucleotide nucleotidyltransferase (709 aa).

2 residues coordinate Mg(2+): D487 and D493. The KH domain occupies 554-613 (PRIHTMKISSDKIKDVIGKGGAVIRALCEETGTTIEIEDDGTIKIAATEGAAAKEAIRRI). The S1 motif domain occupies 623 to 691 (GKIYPGKVMR…RQGRIRLSIK (69 aa)).

The protein belongs to the polyribonucleotide nucleotidyltransferase family. Component of the RNA degradosome, which is a multiprotein complex involved in RNA processing and mRNA degradation. The cofactor is Mg(2+).

It localises to the cytoplasm. The catalysed reaction is RNA(n+1) + phosphate = RNA(n) + a ribonucleoside 5'-diphosphate. In terms of biological role, involved in mRNA degradation. Catalyzes the phosphorolysis of single-stranded polyribonucleotides processively in the 3'- to 5'-direction. In Aliivibrio salmonicida (strain LFI1238) (Vibrio salmonicida (strain LFI1238)), this protein is Polyribonucleotide nucleotidyltransferase.